The primary structure comprises 122 residues: Small ribosomal subunit protein bS6 (122 aa).

This sequence belongs to the bacterial ribosomal protein bS6 family.

Binds together with bS18 to 16S ribosomal RNA. In Neisseria meningitidis serogroup B (strain ATCC BAA-335 / MC58), this protein is Small ribosomal subunit protein bS6 (rpsF).